The following is a 247-amino-acid chain: MKNENLQQKNQTVSSPIVVALDYASQDAALSFVDRIDPQDCRLKVGKEMFTLFGPQFVQTLQQRGFDVFLDLKFHDIPNTVAHAVAAAADLGVWMVNVHASGGSRMMAAAKDALVPFGKDAPLLIAVTVLTSMDEEDLRGLGITVSPAEQAERLAVLTHNSGLDGVVCSAHEAQRLKQVCGQAFKLITPGIRPAGSDVGDQRRIMTPIQAQQAGVDYMVIGRPITQSSDPAQTLCDIRASLLNGIAS.

Substrate contacts are provided by residues Asp22, Lys44, 71–80 (DLKFHDIPNT), Thr131, Arg192, Gln201, Gly221, and Arg222. Lys73 (proton donor) is an active-site residue.

It belongs to the OMP decarboxylase family. Type 1 subfamily. In terms of assembly, homodimer.

It catalyses the reaction orotidine 5'-phosphate + H(+) = UMP + CO2. It functions in the pathway pyrimidine metabolism; UMP biosynthesis via de novo pathway; UMP from orotate: step 2/2. Catalyzes the decarboxylation of orotidine 5'-monophosphate (OMP) to uridine 5'-monophosphate (UMP). The sequence is that of Orotidine 5'-phosphate decarboxylase from Pectobacterium atrosepticum (strain SCRI 1043 / ATCC BAA-672) (Erwinia carotovora subsp. atroseptica).